Consider the following 370-residue polypeptide: Queuine tRNA-ribosyltransferase (370 aa).

Asp89 serves as the catalytic Proton acceptor. Substrate-binding positions include 89 to 93, Asp143, Gln187, and Gly214; that span reads DSGGF. Residues 245–251 are RNA binding; sequence GVGTPED. Asp264 acts as the Nucleophile in catalysis. The tract at residues 269–273 is RNA binding; important for wobble base 34 recognition; it reads TRNAR. 4 residues coordinate Zn(2+): Cys302, Cys304, Cys307, and His333.

It belongs to the queuine tRNA-ribosyltransferase family. As to quaternary structure, homodimer. Within each dimer, one monomer is responsible for RNA recognition and catalysis, while the other monomer binds to the replacement base PreQ1. Zn(2+) serves as cofactor.

It carries out the reaction 7-aminomethyl-7-carbaguanine + guanosine(34) in tRNA = 7-aminomethyl-7-carbaguanosine(34) in tRNA + guanine. The protein operates within tRNA modification; tRNA-queuosine biosynthesis. Functionally, catalyzes the base-exchange of a guanine (G) residue with the queuine precursor 7-aminomethyl-7-deazaguanine (PreQ1) at position 34 (anticodon wobble position) in tRNAs with GU(N) anticodons (tRNA-Asp, -Asn, -His and -Tyr). Catalysis occurs through a double-displacement mechanism. The nucleophile active site attacks the C1' of nucleotide 34 to detach the guanine base from the RNA, forming a covalent enzyme-RNA intermediate. The proton acceptor active site deprotonates the incoming PreQ1, allowing a nucleophilic attack on the C1' of the ribose to form the product. After dissociation, two additional enzymatic reactions on the tRNA convert PreQ1 to queuine (Q), resulting in the hypermodified nucleoside queuosine (7-(((4,5-cis-dihydroxy-2-cyclopenten-1-yl)amino)methyl)-7-deazaguanosine). The chain is Queuine tRNA-ribosyltransferase from Aromatoleum aromaticum (strain DSM 19018 / LMG 30748 / EbN1) (Azoarcus sp. (strain EbN1)).